The chain runs to 373 residues: D-alanine--D-alanine ligase (373 aa).

Residues 165 to 369 (KRLAREAGIP…FGDLVSALIA (205 aa)) enclose the ATP-grasp domain. 192–247 (KERLGLPVFVKPARGGSSIGISKVDSWEEFDAAIDLAFSNDNKVIVEAMIHGAEVE) serves as a coordination point for ATP. 3 residues coordinate Mg(2+): aspartate 324, glutamate 336, and asparagine 338.

Belongs to the D-alanine--D-alanine ligase family. Requires Mg(2+) as cofactor. It depends on Mn(2+) as a cofactor.

It is found in the cytoplasm. It carries out the reaction 2 D-alanine + ATP = D-alanyl-D-alanine + ADP + phosphate + H(+). Its pathway is cell wall biogenesis; peptidoglycan biosynthesis. Its function is as follows. Cell wall formation. The polypeptide is D-alanine--D-alanine ligase (Corynebacterium jeikeium (strain K411)).